We begin with the raw amino-acid sequence, 430 residues long: Putative chloroquine resistance transporter (430 aa).

Residues 1-22 (MLKEGSSLDLSASSSSGTLRSD) form a disordered region. Residues 1-53 (MLKEGSSLDLSASSSSGTLRSDNSFGNSPLDRITSLLILIYKSIRACFKWIYS) are Cytoplasmic-facing. Over residues 7–21 (SLDLSASSSSGTLRS) the composition is skewed to low complexity. Residues 54–74 (KSFGIICILFVILDVLTTVFF) form a helical membrane-spanning segment. Over 75 to 88 (KRFIDHTKNYVMFT) the chain is Vacuolar. Residues 89 to 109 (IQVIIFTFWIIVCCIAILCFL) form a helical membrane-spanning segment. Topologically, residues 110–122 (FNREYMKRHFNVR) are cytoplasmic. A helical membrane pass occupies residues 123–143 (PLVFLGFLDMLSTGLSANGSA). At 144–147 (HTSG) the chain is on the vacuolar side. A helical membrane pass occupies residues 148–168 (LMLVLLGQISVPLTMVSCKLI). Over 169-173 (LSKKY) the chain is Cytoplasmic. Residues 174–194 (HHYQYISSAIILTFAVLKPIL) traverse the membrane as a helical segment. Asn195 is a glycosylation site (N-linked (GlcNAc...) asparagine). Residues 195-206 (NRTDTTDNRFYN) are Vacuolar-facing. Residues 207–223 (NMLYLLASVPDSIASAL) form a helical membrane-spanning segment. Topologically, residues 224 to 239 (REKQYTSKFFHVVKYQ) are cytoplasmic. Residues 240 to 260 (FFGFLFHFFYNILYTLLFTLP) traverse the membrane as a helical segment. At 261 to 306 (FNSVKGYFDSLYKLCVNGYKCIFFGVNTITENCGPTLIPTCDNCLE) the chain is on the vacuolar side. Disulfide bonds link Cys281–Cys304 and Cys293–Cys301. The helical transmembrane segment at 307-329 (AFKIYCLYILFSSAIRVAYVFIM) threads the bilayer. The Cytoplasmic portion of the chain corresponds to 330–335 (LDGSVT). A helical transmembrane segment spans residues 336 to 358 (FTLLLGTVKVPLTSIAFSLRFIA). The Vacuolar portion of the chain corresponds to 359 to 364 (GDSTTS). The helical transmembrane segment at 365 to 385 (FNLLDVVCFLGIVAGLLLYAL) threads the bilayer. Topologically, residues 386–430 (GSKKIQEETDLLESPLIDDAESEHELLSTGTEKLMRSEICHDLFT) are cytoplasmic.

Belongs to the CRT-like transporter family.

It is found in the vacuole membrane. Nutrient transporter. Involved in maintaining the osmotic homeostasis of the digestive vacuole. In Theileria annulata, this protein is Putative chloroquine resistance transporter.